A 531-amino-acid polypeptide reads, in one-letter code: Calcium-dependent protein kinase 21 (531 aa).

Basic residues predominate over residues 1-10 (MGCFSSKHRK). Residues 1–62 (MGCFSSKHRK…STPSSNPVSV (62 aa)) form a disordered region. Residue Gly-2 is the site of N-myristoyl glycine attachment. Over residues 48 to 60 (IHQQISTPSSNPV) the composition is skewed to polar residues. Positions 80 to 338 (YSLGKELGRG…AAQVLEHPWI (259 aa)) constitute a Protein kinase domain. ATP-binding positions include 86 to 94 (LGRGQFGIT) and Lys-109. Asp-204 functions as the Proton acceptor in the catalytic mechanism. Phosphoserine is present on Ser-244. Residues 343 to 373 (APDKPIDSAVLSRMKQFRAMNKLKKLALKVI) are autoinhibitory domain. 4 EF-hand domains span residues 380 to 415 (EEIK…LGSR), 416 to 451 (LSET…RYKL), 452 to 487 (DRDE…YGMG), and 488 to 522 (DEAS…GSTQ). The Ca(2+) site is built by Asp-393, Asp-395, Ser-397, Thr-399, Glu-404, Asp-429, Asp-431, Asn-433, Thr-435, Glu-440, Asp-465, Asp-467, Ser-469, His-471, Glu-476, Asp-500, Asp-502, Asp-504, Arg-506, and Glu-511.

Belongs to the protein kinase superfamily. Ser/Thr protein kinase family. CDPK subfamily. Interacts with SLAC1 and ABI1.

The protein resides in the cell membrane. The catalysed reaction is L-seryl-[protein] + ATP = O-phospho-L-seryl-[protein] + ADP + H(+). It carries out the reaction L-threonyl-[protein] + ATP = O-phospho-L-threonyl-[protein] + ADP + H(+). Its activity is regulated as follows. Activated by calcium. Autophosphorylation may play an important role in the regulation of the kinase activity. Functionally, may play a role in signal transduction pathways that involve calcium as a second messenger. Mediates the phosphorylation and activation of the S-type anion efflux channel SLAC1. In Arabidopsis thaliana (Mouse-ear cress), this protein is Calcium-dependent protein kinase 21 (CPK21).